Consider the following 864-residue polypeptide: Eukaryotic translation initiation factor 3 subunit C (864 aa).

The disordered stretch occupies residues 1–77 (MSRFFARGGS…EESEDEERVT (77 aa)). Residues 14–54 (SSSEDEQELYSDREEEEQFSDSEEESSEAESSEEESSDDEG) show a composition bias toward acidic residues. Residues 602–776 (FHMHINLELL…NAIVFRKGVE (175 aa)) enclose the PCI domain. The disordered stretch occupies residues 815-864 (RDQGAGARGGRGAGRGGQARGGPRFPGGQQGRRPGGQQFSGGALGGAIKA). The span at 820-864 (GARGGRGAGRGGQARGGPRFPGGQQGRRPGGQQFSGGALGGAIKA) shows a compositional bias: gly residues.

Belongs to the eIF-3 subunit C family. Component of the eukaryotic translation initiation factor 3 (eIF-3) complex.

The protein localises to the cytoplasm. Functionally, component of the eukaryotic translation initiation factor 3 (eIF-3) complex, which is involved in protein synthesis of a specialized repertoire of mRNAs and, together with other initiation factors, stimulates binding of mRNA and methionyl-tRNAi to the 40S ribosome. The eIF-3 complex specifically targets and initiates translation of a subset of mRNAs involved in cell proliferation. The polypeptide is Eukaryotic translation initiation factor 3 subunit C (nip1) (Aspergillus terreus (strain NIH 2624 / FGSC A1156)).